Reading from the N-terminus, the 193-residue chain is MVSLVKNQTVSLSKESSALSQLHFGLGWDPVKKKGLLGGLFGGNDSIDLDAGCVLMDSTGKTIDTIWFRKLESTCGAVVHSGDNLTGEGDGDDEVINVNLSRLPANVEYLAFTVNSFRGQSFNDVENAFCRVVDQTGKELARYKLTEQGSHTGIVISSLRRNNGNWDFTALGHACRGRTIDDMHSDIVSAVIR.

Belongs to the CAPAB/TerDEXZ family.

Not known; seems to contribute to the tellurium resistance (Ter) mechanism. Also involved in phage inhibition (Phi) and colicin resistance (PacB). In Serratia marcescens, this protein is Tellurium resistance protein TerZ (terZ).